Here is a 361-residue protein sequence, read N- to C-terminus: Aromatic amino acid aminotransferase (361 aa).

Lys221 is modified (N6-(pyridoxal phosphate)lysine).

The protein belongs to the class-II pyridoxal-phosphate-dependent aminotransferase family. As to quaternary structure, homodimer. Requires pyridoxal 5'-phosphate as cofactor.

It carries out the reaction an aromatic L-alpha-amino acid + 2-oxoglutarate = an aromatic oxo-acid + L-glutamate. In terms of biological role, aminotransferase that catalyzes the conversion of aromatic amino acids and 2-oxoglutarate into corresponding aromatic oxo acids and L-glutamate. This is Aromatic amino acid aminotransferase from Mycobacterium marinum (strain ATCC BAA-535 / M).